Consider the following 189-residue polypeptide: Auxin-responsive protein IAA3 (189 aa).

An EAR-like (transcriptional repression) motif is present at residues 12–16 (LRLGL). The tract at residues 42 to 65 (TDTEKEIESSSRKTETSPPRKAQI) is disordered. Positions 43 to 56 (DTEKEIESSSRKTE) are enriched in basic and acidic residues. The PB1 domain occupies 92–179 (GIYVKVSMDG…TCKRLRIMKG (88 aa)).

The protein belongs to the Aux/IAA family. Homodimers and heterodimers. Interacts with TPL. Interacts with TIR1, the F-box component of the Skp1-Cdc53/cullin-F-box (SCFTIR1) E3 ubiquitin ligase complex. Phosphorylated by phytochrome A in vitro. In terms of tissue distribution, highly expressed in stems and flowers. Expressed in hypocotyls, cotyledons and leaves, but barely detected in roots. Expressed in root tips. In the root meristem, specifically detected at the vascular tissue transition zone.

Its subcellular location is the nucleus. In terms of biological role, aux/IAA proteins are short-lived transcriptional factors that function as repressors of early auxin response genes at low auxin concentrations. Repression is thought to result from the interaction with auxin response factors (ARFs), proteins that bind to the auxin-responsive promoter element (AuxRE). Plays a central role in auxin regulation of root growth, in gravitropism, and in lateral root formation. Regulated by an auxin-induced protein turnover. Formation of heterodimers with ARF proteins may alter their ability to modulate early auxin response genes expression. When activated by cytokinin, restricts the expression of the PIN genes to the vascular transition zone. Induction of SHY2 in the vascular transition zone restricts BRX expression to down-regulate PIN3 and thus limit meristem growth, but proper SHY2 expression requires BRX. Involved in meristem growth and in determining its size. May participate in strigolactone signaling to regulate meristem size and lateral root formation. The protein is Auxin-responsive protein IAA3 (IAA3) of Arabidopsis thaliana (Mouse-ear cress).